A 289-amino-acid chain; its full sequence is 4-hydroxy-tetrahydrodipicolinate synthase (289 aa).

Thr44 serves as a coordination point for pyruvate. Catalysis depends on Tyr130, which acts as the Proton donor/acceptor. Residue Lys158 is the Schiff-base intermediate with substrate of the active site. A pyruvate-binding site is contributed by Ile200.

This sequence belongs to the DapA family. In terms of assembly, homotetramer; dimer of dimers.

The protein resides in the cytoplasm. The catalysed reaction is L-aspartate 4-semialdehyde + pyruvate = (2S,4S)-4-hydroxy-2,3,4,5-tetrahydrodipicolinate + H2O + H(+). It participates in amino-acid biosynthesis; L-lysine biosynthesis via DAP pathway; (S)-tetrahydrodipicolinate from L-aspartate: step 3/4. Catalyzes the condensation of (S)-aspartate-beta-semialdehyde [(S)-ASA] and pyruvate to 4-hydroxy-tetrahydrodipicolinate (HTPA). The protein is 4-hydroxy-tetrahydrodipicolinate synthase of Archaeoglobus fulgidus (strain ATCC 49558 / DSM 4304 / JCM 9628 / NBRC 100126 / VC-16).